Reading from the N-terminus, the 359-residue chain is Nicotinate N-methyltransferase 1 (359 aa).

Residue aspartate 226 participates in S-adenosyl-L-methionine binding.

Belongs to the class I-like SAM-binding methyltransferase superfamily. Cation-independent O-methyltransferase family. In terms of tissue distribution, highly expressed in anthers, pistils, developing siliques, and developing seeds.

It localises to the cytoplasm. It is found in the cytosol. It carries out the reaction nicotinate + S-adenosyl-L-methionine = N-methylnicotinate + S-adenosyl-L-homocysteine. In terms of biological role, involved in nicotinate detoxification in planta. Catalyzes the conversion of nicotinate to N-methylnicotinate, which is a detoxified form of endogenous nicotinate in planta. This Arabidopsis thaliana (Mouse-ear cress) protein is Nicotinate N-methyltransferase 1.